The following is a 749-amino-acid chain: Small G protein signaling modulator 3 (749 aa).

One can recognise a Rab-GAP TBC domain in the interval 113–304 (GIPHGMRPQL…RIWDLFFYEG (192 aa)). Ser-405 is subject to Phosphoserine. Residues 414–438 (EDDLEALKAKNIKQTELVADLREAI) are a coiled coil. One can recognise an SH3 domain in the interval 479 to 538 (SHRRRAKALLDFERHDDDELGFRKNDIITIISQKDEHCWVGELNGLRGWFPAKFVEVLDE). The RUN domain maps to 554 to 717 (GVTDLVRGTL…FAFSLSQDWE (164 aa)).

It belongs to the small G protein signaling modulator family. In terms of assembly, interacts with GJA1. Interaction with GJA1 induces its degradation. Interacts (via RUN domain) with NF2 (via C-terminus). Interacts with RAB3A, RAB4A, RAB5A, RAB8A, RAB11A, RAP1A, RAP1B, RAP2A, RAP2B and PDCD6I. No interaction with RAB27A. No interaction with GJB1 or GJD2. In terms of tissue distribution, expressed in brain, liver, kidney and testis. Moderately expressed in heart, very weakly in lung and muscle. Not expressed in spleen.

The protein localises to the cytoplasm. Its function is as follows. May play a cooperative role in NF2-mediated growth suppression of cells. May act as a modulator of small G protein RAB- and RAP-mediated neuronal signal transduction and vesicular transportation pathways. The sequence is that of Small G protein signaling modulator 3 from Rattus norvegicus (Rat).